Reading from the N-terminus, the 285-residue chain is Bifunctional protein FolD (285 aa).

NADP(+) is bound by residues 166–168 and isoleucine 232; that span reads GAS.

The protein belongs to the tetrahydrofolate dehydrogenase/cyclohydrolase family. Homodimer.

The catalysed reaction is (6R)-5,10-methylene-5,6,7,8-tetrahydrofolate + NADP(+) = (6R)-5,10-methenyltetrahydrofolate + NADPH. It carries out the reaction (6R)-5,10-methenyltetrahydrofolate + H2O = (6R)-10-formyltetrahydrofolate + H(+). It functions in the pathway one-carbon metabolism; tetrahydrofolate interconversion. Catalyzes the oxidation of 5,10-methylenetetrahydrofolate to 5,10-methenyltetrahydrofolate and then the hydrolysis of 5,10-methenyltetrahydrofolate to 10-formyltetrahydrofolate. This Buchnera aphidicola subsp. Schizaphis graminum (strain Sg) protein is Bifunctional protein FolD.